Consider the following 214-residue polypeptide: Thymidylate kinase (214 aa).

15-22 (GLEGAGKT) is an ATP binding site.

The protein belongs to the thymidylate kinase family.

The catalysed reaction is dTMP + ATP = dTDP + ADP. Functionally, phosphorylation of dTMP to form dTDP in both de novo and salvage pathways of dTTP synthesis. In Haemophilus ducreyi (strain 35000HP / ATCC 700724), this protein is Thymidylate kinase.